A 431-amino-acid polypeptide reads, in one-letter code: 3-phosphoshikimate 1-carboxyvinyltransferase (431 aa).

3 residues coordinate 3-phosphoshikimate: K26, S27, and R31. K26 provides a ligand contact to phosphoenolpyruvate. G100 and R129 together coordinate phosphoenolpyruvate. 3-phosphoshikimate contacts are provided by S175, S176, Q177, D308, and Q335. Q177 is a phosphoenolpyruvate binding site. The active-site Proton acceptor is the D308. Phosphoenolpyruvate contacts are provided by R339, R381, and K412.

The protein belongs to the EPSP synthase family. As to quaternary structure, monomer.

It is found in the cytoplasm. It carries out the reaction 3-phosphoshikimate + phosphoenolpyruvate = 5-O-(1-carboxyvinyl)-3-phosphoshikimate + phosphate. Its pathway is metabolic intermediate biosynthesis; chorismate biosynthesis; chorismate from D-erythrose 4-phosphate and phosphoenolpyruvate: step 6/7. Functionally, catalyzes the transfer of the enolpyruvyl moiety of phosphoenolpyruvate (PEP) to the 5-hydroxyl of shikimate-3-phosphate (S3P) to produce enolpyruvyl shikimate-3-phosphate and inorganic phosphate. In Opitutus terrae (strain DSM 11246 / JCM 15787 / PB90-1), this protein is 3-phosphoshikimate 1-carboxyvinyltransferase.